A 116-amino-acid polypeptide reads, in one-letter code: Small ribosomal subunit protein uS10m (116 aa).

It belongs to the universal ribosomal protein uS10 family.

It localises to the mitochondrion. The polypeptide is Small ribosomal subunit protein uS10m (RPS10) (Reclinomonas americana).